Reading from the N-terminus, the 844-residue chain is Translation initiation factor IF-2 (844 aa).

Over residues 1–11 (MTEDVKADVPK) the composition is skewed to basic and acidic residues. 2 disordered regions span residues 1-35 (MTED…SKAV) and 79-248 (RLEA…KGAA). A compositionally biased stretch (low complexity) spans 21–33 (TTVSGTTTSGKSK). Residues 79 to 161 (RLEAEKAATK…AAEEAKRYAE (83 aa)) are compositionally biased toward basic and acidic residues. The span at 162-175 (ADDSDNESSSEDYS) shows a compositional bias: acidic residues. Basic residues predominate over residues 200-210 (RGKNKVAKAKK). Residues 211–237 (GGRDDENSKNSKNERESNRKNQKDAKF) show a composition bias toward basic and acidic residues. One can recognise a tr-type G domain in the interval 343 to 513 (TRAPVVTIMG…LLQSEVLELT (171 aa)). A G1 region spans residues 352 to 359 (GHVDHGKT). Residue 352–359 (GHVDHGKT) participates in GTP binding. The G2 stretch occupies residues 377–381 (GITQH). Residues 399-402 (DTPG) form a G3 region. GTP-binding positions include 399-403 (DTPGH) and 453-456 (NKID). Residues 453–456 (NKID) form a G4 region. A G5 region spans residues 489-491 (SAK).

This sequence belongs to the TRAFAC class translation factor GTPase superfamily. Classic translation factor GTPase family. IF-2 subfamily.

The protein localises to the cytoplasm. In terms of biological role, one of the essential components for the initiation of protein synthesis. Protects formylmethionyl-tRNA from spontaneous hydrolysis and promotes its binding to the 30S ribosomal subunits. Also involved in the hydrolysis of GTP during the formation of the 70S ribosomal complex. The chain is Translation initiation factor IF-2 from Haemophilus influenzae (strain PittGG).